The chain runs to 862 residues: MNVLLEMAFLSQTLPDPYEDFIHHHLQYYGYFKAQKSSLPNSGTHQRVWRNSPRYMLNGSFGERDDFISDSLEKEMLLWPTCLSSTGHAHIDAVNRDSLLLSSPLLRTRQLIFDELDEASPRLREPRELFSCFSSRGPLQAPRWPIECEVIKENIHHIEWVPHQPEYFYQPTGSEKVPEIVGEEQGTVVYQLDSVPAEGTYFTSSRIGGKRGTIKELAVTLQGPDDNTLLFESRFESGNLQKAVRVGIYEYELTLRTDLYTDKHTQWFYFRVQNTRKDATYRFTIVNLLKPKSLYAVGMKPLMYSQLDATIYNIGWRREGREIKYYKNNVDDGQQPLYCLTWTTQFPHDQDTCFFAHFYPYTYTDLQCYLLSVANNPIQSQFCKLRALCRSLAGNTVYLLTITNPSRTPQEAAAKKAVVLSARVHPGESNSSWIMNGFLDFILSNSPDAQLLRDIFVFKVIPMLNPDGVIVGNYRCSLAGRDLNRHYKTVLKDSFPCIWYTKNMIKRLLEEREVLLYCDFHGHSRKNNIFLYGCHSNNRKHWLHERVFPLMLSKNAPDKFSFDSCNFKVQKCKEGTGRVVMWRMGIINSYTMESTFGGSTLGSKRDTHFTIEDLKSLGYHVCDTLLDFCDPDQTKYTQCLQELKELLQQEINKKLNNFGQDMDLEGNWSDIPLSDIESSTSGSDSSLSDGPPIRLLNIVADEPNQKTVLKNPKKKRLQTRKQRNEQYQKSYLMRELKLTENAPGRARFVSTLQKQPTFLKSPESPSPSVRRSENPRLNETQLSGREKGTSLDPPLTSPKNKERIQSKKPGFTASCSPKRSTNSSLGPAPDVKPNWSKTRYSATRKDHATMAVYPSLHIYTYP.

One can recognise a Peptidase M14 domain in the interval 359–629; it reads YPYTYTDLQC…HVCDTLLDFC (271 aa). H425, E428, and H521 together coordinate Zn(2+). E593 functions as the Proton donor/acceptor in the catalytic mechanism. 3 disordered regions span residues 669–692, 704–728, and 750–836; these read SDIP…DGPP, NQKT…EQYQ, and STLQ…PNWS. Low complexity predominate over residues 674-689; it reads SDIESSTSGSDSSLSD. Residues 711–721 show a composition bias toward basic residues; it reads NPKKKRLQTRK. Polar residues predominate over residues 813–825; it reads ASCSPKRSTNSSL.

The protein belongs to the peptidase M14 family. In terms of assembly, interacts with RARRES1, KIF11 and MAPRE1. It depends on Zn(2+) as a cofactor. In terms of tissue distribution, widely expressed. Expressed in tissues with motile cilia such as testis, lung and trachea. Also detected in brain, eye, muscle, pancreas, intestine, stomach, pituitary, spleen, adrenal and kidney. Expressed in mitral and granular cells in brain.

The protein localises to the cytoplasm. Its subcellular location is the cytosol. It localises to the cytoskeleton. It is found in the microtubule organizing center. The protein resides in the centrosome. The protein localises to the centriole. Its subcellular location is the cilium basal body. The catalysed reaction is (L-glutamyl)(n+1)-gamma-L-glutamyl-L-glutamyl-[protein] + H2O = (L-glutamyl)(n)-gamma-L-glutamyl-L-glutamyl-[protein] + L-glutamate. Its activity is regulated as follows. Inhibited by RARRES1. Metallocarboxypeptidase that mediates deglutamylation of tubulin and non-tubulin target proteins. Catalyzes the removal of polyglutamate side chains present on the gamma-carboxyl group of glutamate residues within the C-terminal tail of tubulin protein. Specifically cleaves tubulin long-side-chains, while it is not able to remove the branching point glutamate. Also catalyzes the removal of polyglutamate residues from the carboxy-terminus of non-tubulin proteins such as MYLK. This Mus musculus (Mouse) protein is Cytosolic carboxypeptidase 2.